Here is a 456-residue protein sequence, read N- to C-terminus: Bifunctional protein GlmU (456 aa).

The tract at residues 1 to 229 is pyrophosphorylase; it reads MLNSAMSVVI…LSEVEGVNNR (229 aa). Residues 11–14, lysine 25, glutamine 76, 81–82, 103–105, glycine 140, glutamate 154, asparagine 169, and asparagine 227 each bind UDP-N-acetyl-alpha-D-glucosamine; these read LAAG, GT, and YGD. A Mg(2+)-binding site is contributed by aspartate 105. A Mg(2+)-binding site is contributed by asparagine 227. Positions 230-250 are linker; the sequence is LQLSALERIYQREQADKLLLA. The N-acetyltransferase stretch occupies residues 251–456; sequence GVMLLDPARF…SGWQRPVKKK (206 aa). Residues arginine 333 and lysine 351 each coordinate UDP-N-acetyl-alpha-D-glucosamine. The active-site Proton acceptor is the histidine 363. UDP-N-acetyl-alpha-D-glucosamine contacts are provided by tyrosine 366 and asparagine 377. Acetyl-CoA contacts are provided by residues alanine 380, 386–387, serine 405, alanine 423, and arginine 440; that span reads NY.

This sequence in the N-terminal section; belongs to the N-acetylglucosamine-1-phosphate uridyltransferase family. It in the C-terminal section; belongs to the transferase hexapeptide repeat family. As to quaternary structure, homotrimer. Mg(2+) is required as a cofactor.

It is found in the cytoplasm. The catalysed reaction is alpha-D-glucosamine 1-phosphate + acetyl-CoA = N-acetyl-alpha-D-glucosamine 1-phosphate + CoA + H(+). The enzyme catalyses N-acetyl-alpha-D-glucosamine 1-phosphate + UTP + H(+) = UDP-N-acetyl-alpha-D-glucosamine + diphosphate. It functions in the pathway nucleotide-sugar biosynthesis; UDP-N-acetyl-alpha-D-glucosamine biosynthesis; N-acetyl-alpha-D-glucosamine 1-phosphate from alpha-D-glucosamine 6-phosphate (route II): step 2/2. It participates in nucleotide-sugar biosynthesis; UDP-N-acetyl-alpha-D-glucosamine biosynthesis; UDP-N-acetyl-alpha-D-glucosamine from N-acetyl-alpha-D-glucosamine 1-phosphate: step 1/1. Its pathway is bacterial outer membrane biogenesis; LPS lipid A biosynthesis. Its function is as follows. Catalyzes the last two sequential reactions in the de novo biosynthetic pathway for UDP-N-acetylglucosamine (UDP-GlcNAc). The C-terminal domain catalyzes the transfer of acetyl group from acetyl coenzyme A to glucosamine-1-phosphate (GlcN-1-P) to produce N-acetylglucosamine-1-phosphate (GlcNAc-1-P), which is converted into UDP-GlcNAc by the transfer of uridine 5-monophosphate (from uridine 5-triphosphate), a reaction catalyzed by the N-terminal domain. The protein is Bifunctional protein GlmU of Pectobacterium atrosepticum (strain SCRI 1043 / ATCC BAA-672) (Erwinia carotovora subsp. atroseptica).